A 214-amino-acid chain; its full sequence is Zinc finger protein 11 (214 aa).

Residues 1-27 (MKRTHLASFSNRDKTQEEEGEDGNGDN) are disordered. The C2H2-type zinc finger occupies 49 to 71 (YTCSFCRREFRSAQALGGHMNVH). The Nuclear localization signal signature appears at 72-79 (RRDRAKLR). Positions 89-130 (HHHTPIANPNPNFSSSSSSSTTTAHLEPSLTNQRSKTTPFPS) are disordered. Positions 102 to 111 (SSSSSSSTTT) are enriched in low complexity. A compositionally biased stretch (polar residues) spans 117-128 (SLTNQRSKTTPF).

Expressed in roots, stems, axillary buds and flowers.

It is found in the nucleus. Its function is as follows. Probable transcription factor that may regulate cell division and growth. The chain is Zinc finger protein 11 from Arabidopsis thaliana (Mouse-ear cress).